The following is a 177-amino-acid chain: T-cell receptor beta chain C region (177 aa).

The tract at residues 1 to 150 is c region; it reads EDLANVSAPQ…GVLSATVLYE (150 aa). Asn-5 and Asn-22 each carry an N-linked (GlcNAc...) asparagine glycan. The cysteines at positions 31 and 96 are disulfide-linked. The helical transmembrane segment at 146 to 168 threads the bilayer; sequence TVLYEILLGKATLYAVLVSALVL. The Cytoplasmic segment spans residues 169-177; the sequence is MAMVKRKDS.

Its subcellular location is the membrane. The chain is T-cell receptor beta chain C region from Oryctolagus cuniculus (Rabbit).